The primary structure comprises 206 residues: Protein Nef (206 aa).

Glycine 2 carries N-myristoyl glycine; by host lipidation. Position 6 is a phosphoserine; by host (serine 6). Residues 62 to 65 (EDED) are acidic; interacts with host PACS1 and PACS2; stabilizes the interaction of NEF/MHC-I with host AP1M1; necessary for MHC-I internalization. Positions 69–78 (PVRPQVPLRP) are SH3-binding; interaction with Src family tyrosine kinases. Positions 72–75 (PQVP) match the PxxP; stabilizes the interaction of NEF/MHC-I with host AP1M1; necessary for MHC-I internalization motif. Residues 108–124 (EILDLWVYHTQGFFPDW) are mediates dimerization, Nef-PTE1 interaction. Residues 148–180 (VDPREVEEATEGENNCLLHPVNQHGMEDEHREV) are binding to ATP6V1H. Positions 164 to 165 (LL) match the Dileucine internalization motif; necessary for CD4 internalization motif. The short motif at 174-175 (ED) is the Diacidic; necessary for CD4 internalization element.

Belongs to the lentivirus primate group Nef protein family. As to quaternary structure, monomer; cytosolic form. Homodimer; membrane bound form. Interacts with Nef associated p21-activated kinase (PAK2); this interaction activates PAK2. Associates with the Nef-MHC-I-AP1 complex; this complex is required for MHC-I internalization. Interacts (via C-terminus) with host PI3-kinase. Interacts with host PACS1; this interaction seems to be weak. Interacts with host PACS2. Interacts with host LCK and MAPK3; these interactions inhibit the kinase activity of the latter. Interacts with host ATP6V1H; this interaction may play a role in CD4 endocytosis. Associates with the CD4-Nef-AP2 complex; this complex is required for CD4 internalization. Interacts with host AP2 subunit alpha and AP2 subunit sigma2. Interacts with TCR-zeta chain; this interaction up-regulates the Fas ligand (FasL) surface expression. Interacts with host HCK, LYN, and SRC; these interactions activate the Src family kinases. Interacts with MAP3K5; this interaction inhibits the Fas and TNFR-mediated death signals. Interacts with beta-COP and PTE1. Interacts with human RACK1; this increases Nef phosphorylation by PKC. Interacts with TP53; this interaction decreases the half-life of TP53, protecting the infected cell against p53-mediated apoptosis. Post-translationally, the virion-associated Nef proteins are cleaved by the viral protease to release the soluble C-terminal core protein. Nef is probably cleaved concomitantly with viral structural proteins on maturation of virus particles. Myristoylated. In terms of processing, phosphorylated on serine residues, probably by host PKCdelta and theta.

The protein localises to the host cell membrane. The protein resides in the virion. Its subcellular location is the secreted. It is found in the host Golgi apparatus membrane. Its function is as follows. Factor of infectivity and pathogenicity, required for optimal virus replication. Alters numerous pathways of T-lymphocyte function and down-regulates immunity surface molecules in order to evade host defense and increase viral infectivity. Alters the functionality of other immunity cells, like dendritic cells, monocytes/macrophages and NK cells. In terms of biological role, in infected CD4(+) T-lymphocytes, down-regulates the surface MHC-I, mature MHC-II, CD4, CD28, CCR5 and CXCR4 molecules. Mediates internalization and degradation of host CD4 through the interaction of with the cytoplasmic tail of CD4, the recruitment of AP-2 (clathrin adapter protein complex 2), internalization through clathrin coated pits, and subsequent transport to endosomes and lysosomes for degradation. Diverts host MHC-I molecules to the trans-Golgi network-associated endosomal compartments by an endocytic pathway to finally target them for degradation. MHC-I down-regulation may involve AP-1 (clathrin adapter protein complex 1) or possibly Src family kinase-ZAP70/Syk-PI3K cascade recruited by PACS2. In consequence infected cells are masked for immune recognition by cytotoxic T-lymphocytes. Decreasing the number of immune receptors also prevents reinfection by more HIV particles (superinfection). Down-regulates host SERINC3 and SERINC5 thereby excluding these proteins from the viral particles. Virion infectivity is drastically higher when SERINC3 or SERINC5 are excluded from the viral envelope, because these host antiviral proteins impair the membrane fusion event necessary for subsequent virion penetration. Functionally, bypasses host T-cell signaling by inducing a transcriptional program nearly identical to that of anti-CD3 cell activation. Interaction with TCR-zeta chain up-regulates the Fas ligand (FasL). Increasing surface FasL molecules and decreasing surface MHC-I molecules on infected CD4(+) cells send attacking cytotoxic CD8+ T-lymphocytes into apoptosis. Plays a role in optimizing the host cell environment for viral replication without causing cell death by apoptosis. Protects the infected cells from apoptosis in order to keep them alive until the next virus generation is ready to strike. Inhibits the Fas and TNFR-mediated death signals by blocking MAP3K5/ASK1. Decreases the half-life of TP53, protecting the infected cell against p53-mediated apoptosis. Inhibits the apoptotic signals regulated by the Bcl-2 family proteins through the formation of a Nef/PI3-kinase/PAK2 complex that leads to activation of PAK2 and induces phosphorylation of host BAD. Its function is as follows. Extracellular Nef protein targets CD4(+) T-lymphocytes for apoptosis by interacting with CXCR4 surface receptors. This chain is Protein Nef, found in Homo sapiens (Human).